We begin with the raw amino-acid sequence, 197 residues long: Holliday junction branch migration complex subunit RuvA (197 aa).

Residues 1-64 (MYDYIKGIYK…DDSINLYGFF (64 aa)) form a domain I region. The interval 65 to 143 (TEEERDMFNL…NDDIISDIDD (79 aa)) is domain II. Positions 144–154 (LDSISNFQLHS) are flexible linker. A domain III region spans residues 154–197 (SAEALEALMSLGYSQKESEKALKNVDKENSLEDIIKACLKYLMG).

This sequence belongs to the RuvA family. As to quaternary structure, homotetramer. Forms an RuvA(8)-RuvB(12)-Holliday junction (HJ) complex. HJ DNA is sandwiched between 2 RuvA tetramers; dsDNA enters through RuvA and exits via RuvB. An RuvB hexamer assembles on each DNA strand where it exits the tetramer. Each RuvB hexamer is contacted by two RuvA subunits (via domain III) on 2 adjacent RuvB subunits; this complex drives branch migration. In the full resolvosome a probable DNA-RuvA(4)-RuvB(12)-RuvC(2) complex forms which resolves the HJ.

It is found in the cytoplasm. Its function is as follows. The RuvA-RuvB-RuvC complex processes Holliday junction (HJ) DNA during genetic recombination and DNA repair, while the RuvA-RuvB complex plays an important role in the rescue of blocked DNA replication forks via replication fork reversal (RFR). RuvA specifically binds to HJ cruciform DNA, conferring on it an open structure. The RuvB hexamer acts as an ATP-dependent pump, pulling dsDNA into and through the RuvAB complex. HJ branch migration allows RuvC to scan DNA until it finds its consensus sequence, where it cleaves and resolves the cruciform DNA. The protein is Holliday junction branch migration complex subunit RuvA of Clostridium tetani (strain Massachusetts / E88).